A 472-amino-acid chain; its full sequence is Trigger factor (472 aa).

The PPIase FKBP-type domain occupies 174–261 (GDIAVLGFKG…LKDLKTRELP (88 aa)). The disordered stretch occupies residues 430–472 (ENSTLTEQAPAADDADDAEKPAAKKKPAAKKKTPAKSKTDAEA). Residues 452–464 (AKKKPAAKKKTPA) show a composition bias toward basic residues.

Belongs to the FKBP-type PPIase family. Tig subfamily.

The protein localises to the cytoplasm. The enzyme catalyses [protein]-peptidylproline (omega=180) = [protein]-peptidylproline (omega=0). In terms of biological role, involved in protein export. Acts as a chaperone by maintaining the newly synthesized protein in an open conformation. Functions as a peptidyl-prolyl cis-trans isomerase. This chain is Trigger factor, found in Parasynechococcus marenigrum (strain WH8102).